A 314-amino-acid chain; its full sequence is MMLLGASLYLNNTQEVSDEIDTANLYANWKMKYNRRYTSQRDEMYRFKVFSDNLNYIRAFQDSTESATYTLELNQFADMSQQEFASTYLSLRVPKTAKLNASNANFQYKGAEVDWTDNKKVKYPAVKNQGSCGSCWAFSAVGALEINTDIELNKKYELSEQDLVDCSGPYDNEGCNGGWMDSAFEYVADNGLAEAKDYPYTAKDGTCKTSVKRPYTHVQGFTDIDSCDELAQAIQERTVSVAVDANPWQFYRSGVLSKCTKNLNHGVVLVGVQADGAWKIRNSWGSSWGEAGHIRLAGGDTCGICAAPSFPILG.

Positions 1–24 are cleaved as a signal peptide; sequence MMLLGASLYLNNTQEVSDEIDTAN. Positions 25–109 are cleaved as a propeptide — activation peptide; the sequence is LYANWKMKYN…NASNANFQYK (85 aa). 3 disulfide bridges follow: Cys-132-Cys-175, Cys-166-Cys-207, and Cys-259-Cys-302. Residue Cys-135 is part of the active site. Active-site residues include His-265 and Asn-282.

The protein belongs to the peptidase C1 family.

The protein localises to the secreted. The catalysed reaction is Specificity close to that of papain. As compared to cathepsin B, cathepsin L exhibits higher activity toward protein substrates, but has little activity on Z-Arg-Arg-NHMec, and no peptidyl-dipeptidase activity.. Functionally, may be involved in extracellular digestion. The sequence is that of Cathepsin L 2 from Paramecium tetraurelia.